A 364-amino-acid polypeptide reads, in one-letter code: Protein FAM81A (364 aa).

3 coiled-coil regions span residues 75-107 (FLEE…RDNI), 158-189 (NKEQ…VDLS), and 261-287 (ANER…QKRN). A disordered region spans residues 281 to 300 (EESQKRNAEGQRKPDEEKVH).

It belongs to the FAM81 family. In terms of assembly, interacts with DLG4/PSD-95, GRIN2B/GLUN2B and SYNGAP1; the interactions facilitate condensate formation. Expressed in most regions of the brain (at protein level).

The protein localises to the postsynaptic density. Its subcellular location is the cytoplasm. In terms of biological role, facilitates the interaction and assembly of proteins within the postsynaptic density by promoting the condensation of postsynaptic proteins via liquid-liquid phase separation. Required for neuronal activity. Accumulation at the postsynaptic density results in enlargement of dendritic spines. This Mus musculus (Mouse) protein is Protein FAM81A (Fam81a).